A 345-amino-acid polypeptide reads, in one-letter code: Heat-inducible transcription repressor HrcA (345 aa).

This sequence belongs to the HrcA family.

Negative regulator of class I heat shock genes (grpE-dnaK-dnaJ and groELS operons). Prevents heat-shock induction of these operons. This Listeria welshimeri serovar 6b (strain ATCC 35897 / DSM 20650 / CCUG 15529 / CIP 8149 / NCTC 11857 / SLCC 5334 / V8) protein is Heat-inducible transcription repressor HrcA.